The primary structure comprises 189 residues: Peroxiredoxin sll1621 (189 aa).

One can recognise a Thioredoxin domain in the interval 2–177; that stretch reads TPERVPSVVF…MLAYLKGAEA (176 aa). Catalysis depends on Cys55, which acts as the Cysteine sulfenic acid (-SOH) intermediate (for peroxiredoxin activity).

Belongs to the peroxiredoxin family. Prx5 subfamily. As to quaternary structure, monomer.

The enzyme catalyses a hydroperoxide + 2 glutathione = an alcohol + glutathione disulfide + H2O. Thiol-specific peroxidase that catalyzes the reduction of hydrogen peroxide and organic hydroperoxides to water and alcohols, respectively. Plays a role in cell protection against oxidative stress by detoxifying peroxides. This Synechocystis sp. (strain ATCC 27184 / PCC 6803 / Kazusa) protein is Peroxiredoxin sll1621.